The following is a 421-amino-acid chain: MRKTNMWFLERLRGSGENGAARGVGSEAGDKASKGPLYSNVLTPDKIPDFFIPPKLPSGPAEGEGQAALGPSTSEQNLASAAPRQTPRSPRLPAKLAAESKSLLKAATRHVIQIESAEDWLSEEATDADPQAQGAMSLPSVPKAQTSYGFAMLAESPHTRRKESLFHSEHGALAQVGSPGAGRRRAAAKANGGDGGPREAGGALMSPGRYFSGGESDTGSSAESSPFGSPLLSRSVSLLKGFAQDSQAKVSQLRHSVGRHGSLSADDSTPDASPGSRRRLTRRAPPEPGPESGQARGEHTVHVGPRGSVRLLAEYEAGQARLRVHLLAAEGLYDRLCDARSINCCVGLCLVPGKLQKQRSTIVKNSRRPVFNEDFFFDGLGPASVRKLALRIKVVNKGSSLKRDTLLGEKELPLTSLLPFL.

Disordered stretches follow at residues 13-97 (RGSG…AKLA), 119-140 (DWLS…SLPS), 158-228 (HTRR…SPFG), and 250-303 (VSQL…TVHV). The span at 215–228 (ESDTGSSAESSPFG) shows a compositional bias: polar residues. Residues serine 262, serine 264, and serine 273 each carry the phosphoserine modification. One can recognise a C2 domain in the interval 305 to 421 (PRGSVRLLAE…LPLTSLLPFL (117 aa)).

This sequence belongs to the C2CD4 family.

This Homo sapiens (Human) protein is C2 calcium-dependent domain-containing protein 4C (C2CD4C).